Here is a 592-residue protein sequence, read N- to C-terminus: Aspartate--tRNA(Asp/Asn) ligase (592 aa).

An L-aspartate-binding site is contributed by glutamate 175. Positions 199-202 (QLFK) are aspartate. An L-aspartate-binding site is contributed by arginine 221. ATP-binding positions include 221–223 (RDE) and glutamine 230. Histidine 450 is a binding site for L-aspartate. ATP is bound at residue glutamate 483. Position 490 (arginine 490) interacts with L-aspartate. 535-538 (GLDR) is an ATP binding site.

The protein belongs to the class-II aminoacyl-tRNA synthetase family. Type 1 subfamily. As to quaternary structure, homodimer.

It is found in the cytoplasm. It carries out the reaction tRNA(Asx) + L-aspartate + ATP = L-aspartyl-tRNA(Asx) + AMP + diphosphate. Aspartyl-tRNA synthetase with relaxed tRNA specificity since it is able to aspartylate not only its cognate tRNA(Asp) but also tRNA(Asn). Reaction proceeds in two steps: L-aspartate is first activated by ATP to form Asp-AMP and then transferred to the acceptor end of tRNA(Asp/Asn). In Acinetobacter baumannii (strain ATCC 17978 / DSM 105126 / CIP 53.77 / LMG 1025 / NCDC KC755 / 5377), this protein is Aspartate--tRNA(Asp/Asn) ligase.